Reading from the N-terminus, the 729-residue chain is Fatty acid oxidation complex subunit alpha (729 aa).

Positions 1-189 (MLYKGDTLYL…KIGLVDGVVK (189 aa)) are enoyl-CoA hydratase/isomerase. Position 296 (D296) interacts with substrate. A 3-hydroxyacyl-CoA dehydrogenase region spans residues 311 to 729 (ETPKQAAVLG…ARPVGSLKTA (419 aa)). NAD(+) is bound by residues M324, D343, 400–402 (VVE), K407, and S429. The active-site For 3-hydroxyacyl-CoA dehydrogenase activity is H450. Position 453 (N453) interacts with NAD(+). Substrate contacts are provided by N500 and Y660. A disordered region spans residues 708-729 (RHNEPYYPPVEPARPVGSLKTA).

It in the N-terminal section; belongs to the enoyl-CoA hydratase/isomerase family. In the C-terminal section; belongs to the 3-hydroxyacyl-CoA dehydrogenase family. Heterotetramer of two alpha chains (FadB) and two beta chains (FadA).

It catalyses the reaction a (3S)-3-hydroxyacyl-CoA + NAD(+) = a 3-oxoacyl-CoA + NADH + H(+). The catalysed reaction is a (3S)-3-hydroxyacyl-CoA = a (2E)-enoyl-CoA + H2O. The enzyme catalyses a 4-saturated-(3S)-3-hydroxyacyl-CoA = a (3E)-enoyl-CoA + H2O. It carries out the reaction (3S)-3-hydroxybutanoyl-CoA = (3R)-3-hydroxybutanoyl-CoA. It catalyses the reaction a (3Z)-enoyl-CoA = a 4-saturated (2E)-enoyl-CoA. The catalysed reaction is a (3E)-enoyl-CoA = a 4-saturated (2E)-enoyl-CoA. Its pathway is lipid metabolism; fatty acid beta-oxidation. In terms of biological role, involved in the aerobic and anaerobic degradation of long-chain fatty acids via beta-oxidation cycle. Catalyzes the formation of 3-oxoacyl-CoA from enoyl-CoA via L-3-hydroxyacyl-CoA. It can also use D-3-hydroxyacyl-CoA and cis-3-enoyl-CoA as substrate. This is Fatty acid oxidation complex subunit alpha from Salmonella typhimurium (strain LT2 / SGSC1412 / ATCC 700720).